The primary structure comprises 559 residues: (-)-drimenol synthase (559 aa).

Residues D311, D315, D456, S460, and E464 each contribute to the Mg(2+) site. Positions 311 to 315 (DDIYD) match the DDXXD motif motif.

The protein belongs to the terpene synthase family. Requires Mg(2+) as cofactor.

The catalysed reaction is (2E,6E)-farnesyl diphosphate + H2O = (5S,9S,10S)-drim-7-en-11-ol + diphosphate. It functions in the pathway secondary metabolite biosynthesis; terpenoid biosynthesis. Catalyzes the conversion of (2E,6E)-farnesyl diphosphate (FPP) into drimenol, a precursor of the sesquiterpenoid polygodial. Polygodial has been shown to be an antifeedant for a number of herbivorous insects. This is (-)-drimenol synthase from Persicaria hydropiper (Marshpepper knotweed).